The sequence spans 495 residues: ATP synthase subunit beta, chloroplastic (495 aa).

Position 172–179 (172–179 (GGAGVGKT)) interacts with ATP.

This sequence belongs to the ATPase alpha/beta chains family. As to quaternary structure, F-type ATPases have 2 components, CF(1) - the catalytic core - and CF(0) - the membrane proton channel. CF(1) has five subunits: alpha(3), beta(3), gamma(1), delta(1), epsilon(1). CF(0) has four main subunits: a(1), b(1), b'(1) and c(9-12).

The protein resides in the plastid. It localises to the chloroplast thylakoid membrane. The catalysed reaction is ATP + H2O + 4 H(+)(in) = ADP + phosphate + 5 H(+)(out). Its function is as follows. Produces ATP from ADP in the presence of a proton gradient across the membrane. The catalytic sites are hosted primarily by the beta subunits. The chain is ATP synthase subunit beta, chloroplastic from Brimeura amethystina (Spanish hyacinth).